A 373-amino-acid polypeptide reads, in one-letter code: Putative F-box/kelch-repeat protein At2g41360 (373 aa).

Residues 8 to 54 (WSSLSCLPDEMVLNCLARVPRRYYENISCVSVRLRSLVRTPELYRMR) form the F-box domain. Kelch repeat units follow at residues 116–162 (EIYF…VFDG) and 163–208 (KIHV…MVSS).

This chain is Putative F-box/kelch-repeat protein At2g41360, found in Arabidopsis thaliana (Mouse-ear cress).